The chain runs to 278 residues: TATA box-binding protein-associated factor RNA polymerase I subunit D (278 aa).

Disordered stretches follow at residues Leu-19–Glu-71 and Lys-88–Pro-115. Phosphoserine is present on Ser-23. 2 stretches are compositionally biased toward basic residues: residues Arg-43–Val-53 and Lys-88–Tyr-99. Phosphoserine occurs at positions 138 and 234.

Component of the transcription factor SL1/TIF-IB complex, composed of TBP and at least TAF1A, TAF1B, TAF1C and TAF1D. Interacts with UBTF.

The protein resides in the nucleus. Component of the transcription factor SL1/TIF-IB complex, which is involved in the assembly of the PIC (preinitiation complex) during RNA polymerase I-dependent transcription. The rate of PIC formation probably is primarily dependent on the rate of association of SL1/TIF-IB with the rDNA promoter. SL1/TIF-IB is involved in stabilization of nucleolar transcription factor 1/UBTF on rDNA. Formation of SL1/TIF-IB excludes the association of TBP with TFIID subunits. This chain is TATA box-binding protein-associated factor RNA polymerase I subunit D (TAF1D), found in Pongo abelii (Sumatran orangutan).